We begin with the raw amino-acid sequence, 419 residues long: Serine--tRNA ligase (419 aa).

226-228 (TSE) contacts L-serine. Residues 257–259 (RRE) and Val-273 each bind ATP. Glu-280 contributes to the L-serine binding site. Residue 344–347 (ELTS) participates in ATP binding. Position 379 (Thr-379) interacts with L-serine.

Belongs to the class-II aminoacyl-tRNA synthetase family. Type-1 seryl-tRNA synthetase subfamily. As to quaternary structure, homodimer. The tRNA molecule binds across the dimer.

The protein localises to the cytoplasm. It catalyses the reaction tRNA(Ser) + L-serine + ATP = L-seryl-tRNA(Ser) + AMP + diphosphate + H(+). The catalysed reaction is tRNA(Sec) + L-serine + ATP = L-seryl-tRNA(Sec) + AMP + diphosphate + H(+). The protein operates within aminoacyl-tRNA biosynthesis; selenocysteinyl-tRNA(Sec) biosynthesis; L-seryl-tRNA(Sec) from L-serine and tRNA(Sec): step 1/1. Its function is as follows. Catalyzes the attachment of serine to tRNA(Ser). Is also able to aminoacylate tRNA(Sec) with serine, to form the misacylated tRNA L-seryl-tRNA(Sec), which will be further converted into selenocysteinyl-tRNA(Sec). This is Serine--tRNA ligase from Corynebacterium efficiens (strain DSM 44549 / YS-314 / AJ 12310 / JCM 11189 / NBRC 100395).